The chain runs to 225 residues: Uracil-DNA glycosylase (225 aa).

Aspartate 65 functions as the Proton acceptor in the catalytic mechanism.

This sequence belongs to the uracil-DNA glycosylase (UDG) superfamily. UNG family.

It is found in the cytoplasm. The enzyme catalyses Hydrolyzes single-stranded DNA or mismatched double-stranded DNA and polynucleotides, releasing free uracil.. Functionally, excises uracil residues from the DNA which can arise as a result of misincorporation of dUMP residues by DNA polymerase or due to deamination of cytosine. The sequence is that of Uracil-DNA glycosylase from Alkaliphilus oremlandii (strain OhILAs) (Clostridium oremlandii (strain OhILAs)).